The primary structure comprises 425 residues: Serine--tRNA ligase (425 aa).

Disordered regions lie at residues 43-69 (QRSS…SDPK) and 108-134 (LPNL…WGKP). Residues 117–134 (PEGRDENDNQERHRWGKP) show a composition bias toward basic and acidic residues. 233 to 235 (TAE) lines the L-serine pocket. Residue 264 to 266 (RRE) participates in ATP binding. An L-serine-binding site is contributed by Glu-287. Position 351–354 (351–354 (EISS)) interacts with ATP. L-serine is bound at residue Ser-385.

Belongs to the class-II aminoacyl-tRNA synthetase family. Type-1 seryl-tRNA synthetase subfamily. Homodimer. The tRNA molecule binds across the dimer.

Its subcellular location is the cytoplasm. The enzyme catalyses tRNA(Ser) + L-serine + ATP = L-seryl-tRNA(Ser) + AMP + diphosphate + H(+). The catalysed reaction is tRNA(Sec) + L-serine + ATP = L-seryl-tRNA(Sec) + AMP + diphosphate + H(+). The protein operates within aminoacyl-tRNA biosynthesis; selenocysteinyl-tRNA(Sec) biosynthesis; L-seryl-tRNA(Sec) from L-serine and tRNA(Sec): step 1/1. Functionally, catalyzes the attachment of serine to tRNA(Ser). Is also able to aminoacylate tRNA(Sec) with serine, to form the misacylated tRNA L-seryl-tRNA(Sec), which will be further converted into selenocysteinyl-tRNA(Sec). This is Serine--tRNA ligase from Prochlorococcus marinus (strain MIT 9313).